We begin with the raw amino-acid sequence, 449 residues long: Tubulin alpha-B chain (449 aa).

GTP is bound by residues Gln11, Glu71, Ser140, Gly144, Thr145, Thr179, Asn206, and Asn228. Mg(2+) is bound at residue Glu71. Residue Glu254 is part of the active site.

The protein belongs to the tubulin family. In terms of assembly, dimer of alpha and beta chains. A typical microtubule is a hollow water-filled tube with an outer diameter of 25 nm and an inner diameter of 15 nM. Alpha-beta heterodimers associate head-to-tail to form protofilaments running lengthwise along the microtubule wall with the beta-tubulin subunit facing the microtubule plus end conferring a structural polarity. Microtubules usually have 13 protofilaments but different protofilament numbers can be found in some organisms and specialized cells. The cofactor is Mg(2+).

Its subcellular location is the cytoplasm. The protein resides in the cytoskeleton. It catalyses the reaction GTP + H2O = GDP + phosphate + H(+). Its function is as follows. Tubulin is the major constituent of microtubules, a cylinder consisting of laterally associated linear protofilaments composed of alpha- and beta-tubulin heterodimers. Microtubules grow by the addition of GTP-tubulin dimers to the microtubule end, where a stabilizing cap forms. Below the cap, tubulin dimers are in GDP-bound state, owing to GTPase activity of alpha-tubulin. In Neurospora crassa (strain ATCC 24698 / 74-OR23-1A / CBS 708.71 / DSM 1257 / FGSC 987), this protein is Tubulin alpha-B chain (tba-2).